Consider the following 446-residue polypeptide: C4-dicarboxylate transport protein 2 (446 aa).

10 helical membrane passes run 7–26, 46–64, 77–99, 152–171, 192–211, 221–243, 291–313, 318–340, 353–375, and 381–403; these read PLFGQVLIALALGIALGIWA, MLIAPIVFSVVVVGICGAG, VIYFEVVTTIALALGIALAYAFG, ILQVLLVSILFGCALSLLGE, AVVIRLAPLGVLGAVAFTVG, LGFLVLLFYAAVAVFVVVVLGGI, VVGLVIPTGYSFNLDAFSIYLTL, IAQATNTPLALSDLLLILGVALI, IVILAATLSVIPAIPAIGLVLVL, and IGIARALGNLLGNCVATVVIAAW.

Belongs to the dicarboxylate/amino acid:cation symporter (DAACS) (TC 2.A.23) family.

Its subcellular location is the cell inner membrane. Its function is as follows. Responsible for the transport of dicarboxylates such as succinate, fumarate, and malate from the periplasm across the membrane. The sequence is that of C4-dicarboxylate transport protein 2 (dctA2) from Ralstonia nicotianae (strain ATCC BAA-1114 / GMI1000) (Ralstonia solanacearum).